Consider the following 293-residue polypeptide: Glycine--tRNA ligase alpha subunit (293 aa).

Belongs to the class-II aminoacyl-tRNA synthetase family. In terms of assembly, tetramer of two alpha and two beta subunits.

The protein resides in the cytoplasm. It carries out the reaction tRNA(Gly) + glycine + ATP = glycyl-tRNA(Gly) + AMP + diphosphate. The chain is Glycine--tRNA ligase alpha subunit from Oceanobacillus iheyensis (strain DSM 14371 / CIP 107618 / JCM 11309 / KCTC 3954 / HTE831).